The following is a 414-amino-acid chain: MLILTKTAGVFFKPSKRKVYEFLRSFNFHPGTLFLHKIVLGIETSCDDTAAAVVDETGNVLGEAIHSQTEVHLKTGGIVPPAAQQLHRENIQRIVQEALSASGVSPSDLSAIATTIKPGLALSLGVGLSFSLQLVGQLKKPFIPIHHMEAHALTIRLTNKVEFPFLVLLISGGHCLLALVQGVSDFLLLGKSLDIAPGDMLDKVARRLSLIKHPECSTMSGGKAIEHLAKQGNRFHFDIKPPLHHAKNCDFSFTGLQHVTDKIIMKKEKEEGIEKGQILSSAADIAATVQHTMACHLVKRTHRAILFCKQRDLLPQNNAVLVASGGVASNFYIRRALEILTNATQCTLLCPPPRLCTDNGIMIAWNGIERLRAGLGILHDIEGIRYEPKCPLGVDISKEVGEASIKVPQLKMEI.

A mitochondrion-targeting transit peptide spans methionine 1–histidine 29. Residues lysine 74 and lysine 140 each carry the N6-acetyllysine modification. The a divalent metal cation site is built by histidine 147 and histidine 151. Substrate contacts are provided by residues leucine 169–glycine 173 and aspartate 202. Lysine 203 is modified (N6-acetyllysine). Residues glycine 222 and glutamate 226 each coordinate substrate. 3 positions are modified to N6-acetyllysine: lysine 230, lysine 240, and lysine 299. Residues serine 329 to asparagine 330 and threonine 357 each bind substrate. Aspartate 358 is a binding site for a divalent metal cation.

It belongs to the KAE1 / TsaD family. In terms of assembly, monomer. A divalent metal cation is required as a cofactor. As to expression, widely expressed, with maximum expression in pituitary gland, prostate, rectum and uterus.

It is found in the mitochondrion. It carries out the reaction L-threonylcarbamoyladenylate + adenosine(37) in tRNA = N(6)-L-threonylcarbamoyladenosine(37) in tRNA + AMP + H(+). Required for the formation of a threonylcarbamoyl group on adenosine at position 37 (t(6)A37) in mitochondrial tRNAs that read codons beginning with adenine. Probably involved in the transfer of the threonylcarbamoyl moiety of threonylcarbamoyl-AMP (TC-AMP) to the N6 group of A37. Involved in mitochondrial genome maintenance. The polypeptide is tRNA N6-adenosine threonylcarbamoyltransferase, mitochondrial (Homo sapiens (Human)).